Reading from the N-terminus, the 269-residue chain is Diaminopimelate epimerase (269 aa).

Residues asparagine 15 and asparagine 66 each contribute to the substrate site. Cysteine 75 serves as the catalytic Proton donor. Substrate is bound by residues 76–77, asparagine 152, asparagine 185, and 203–204; these read GN and ER. The Proton acceptor role is filled by cysteine 212. 213–214 contacts substrate; the sequence is GT.

The protein belongs to the diaminopimelate epimerase family. In terms of assembly, homodimer.

The protein localises to the cytoplasm. It carries out the reaction (2S,6S)-2,6-diaminopimelate = meso-2,6-diaminopimelate. It functions in the pathway amino-acid biosynthesis; L-lysine biosynthesis via DAP pathway; DL-2,6-diaminopimelate from LL-2,6-diaminopimelate: step 1/1. Its function is as follows. Catalyzes the stereoinversion of LL-2,6-diaminopimelate (L,L-DAP) to meso-diaminopimelate (meso-DAP), a precursor of L-lysine and an essential component of the bacterial peptidoglycan. The sequence is that of Diaminopimelate epimerase from Parabacteroides distasonis (strain ATCC 8503 / DSM 20701 / CIP 104284 / JCM 5825 / NCTC 11152).